The primary structure comprises 337 residues: MPEVTVTEHLLLHQKKSPAATGQFTTLLNDLVLSAKIISRSVTKAGLLDVLGGTGEVNVQGELVQKLDEFANRVLIYRMERSGAVCAMASEENADIIKVPEKLHRGDYVLIFDPLDGSSNIDVNINVGTIFSILRRKSPASDDVCIDDVLQPGYEQVAAGYILYGPSTMLVFSTGQGVHGFTLDPSVGEFLLSHPDMSIPERGRIYSINESYWNYWDEPTREIVSYFKGDHNERGKPYSLRYVGSLVADFHRTLLYGGIFMYPMDYRHPDKPQGKLRLMCEASPLAFLAEQAGGRAIDGSRRILDVCPGTLHERIPLFIGSARDVDKVEEIYARHRA.

Mg(2+) contacts are provided by glutamate 91, aspartate 113, leucine 115, and aspartate 116. Substrate-binding positions include 116–119 (DGSS), asparagine 209, tyrosine 242, and lysine 275. Residue glutamate 281 coordinates Mg(2+).

Belongs to the FBPase class 1 family. In terms of assembly, homotetramer. It depends on Mg(2+) as a cofactor.

The protein localises to the cytoplasm. It carries out the reaction beta-D-fructose 1,6-bisphosphate + H2O = beta-D-fructose 6-phosphate + phosphate. It participates in carbohydrate biosynthesis; gluconeogenesis. The chain is Fructose-1,6-bisphosphatase class 1 from Nitratidesulfovibrio vulgaris (strain DP4) (Desulfovibrio vulgaris).